Consider the following 111-residue polypeptide: uncharacterized protein (111 aa).

4 consecutive transmembrane segments (helical) span residues 3–23 (WVLV…LKHA), 24–44 (DSLL…ILLI), 54–74 (AAYT…GIVL), and 80–100 (AAQM…KLFT).

The protein belongs to the drug/metabolite transporter (DMT) superfamily. Small multidrug resistance (SMR) (TC 2.A.7.1) family.

It is found in the cell membrane. This is an uncharacterized protein from Bacillus subtilis (strain 168).